We begin with the raw amino-acid sequence, 249 residues long: Coproheme decarboxylase (249 aa).

Residues Arg131, 145 to 149, His172, and Gln185 contribute to the Fe-coproporphyrin III site; that span reads YPMNK. Tyr145 is an active-site residue.

The protein belongs to the ChdC family. Type 1 subfamily. Requires Fe-coproporphyrin III as cofactor.

The enzyme catalyses Fe-coproporphyrin III + 2 H2O2 + 2 H(+) = heme b + 2 CO2 + 4 H2O. It carries out the reaction Fe-coproporphyrin III + H2O2 + H(+) = harderoheme III + CO2 + 2 H2O. It catalyses the reaction harderoheme III + H2O2 + H(+) = heme b + CO2 + 2 H2O. It functions in the pathway porphyrin-containing compound metabolism; protoheme biosynthesis. Its function is as follows. Involved in coproporphyrin-dependent heme b biosynthesis. Catalyzes the decarboxylation of Fe-coproporphyrin III (coproheme) to heme b (protoheme IX), the last step of the pathway. The reaction occurs in a stepwise manner with a three-propionate intermediate. This chain is Coproheme decarboxylase, found in Staphylococcus carnosus (strain TM300).